The sequence spans 158 residues: Cyclic pyranopterin monophosphate synthase (158 aa).

Substrate-binding positions include 76–78 and 114–115; these read LCH and ME. The active site involves Asp-129.

Belongs to the MoaC family. In terms of assembly, homohexamer; trimer of dimers.

It catalyses the reaction (8S)-3',8-cyclo-7,8-dihydroguanosine 5'-triphosphate = cyclic pyranopterin phosphate + diphosphate. Its pathway is cofactor biosynthesis; molybdopterin biosynthesis. Catalyzes the conversion of (8S)-3',8-cyclo-7,8-dihydroguanosine 5'-triphosphate to cyclic pyranopterin monophosphate (cPMP). The sequence is that of Cyclic pyranopterin monophosphate synthase from Shewanella loihica (strain ATCC BAA-1088 / PV-4).